The sequence spans 216 residues: Putative F-box protein At2g03610 (216 aa).

One can recognise an F-box domain in the interval 19-69 (NQDWSKLCPDLLRPILESLSSIDFHRAKTVCSDWYSVWKTCKGYDSKWNQN).

This Arabidopsis thaliana (Mouse-ear cress) protein is Putative F-box protein At2g03610.